Consider the following 264-residue polypeptide: Glutamate racemase (264 aa).

Substrate contacts are provided by residues 10 to 11 (DS) and 42 to 43 (YG). The active-site Proton donor/acceptor is Cys73. 74–75 (NT) lines the substrate pocket. Residue Cys183 is the Proton donor/acceptor of the active site. 184 to 185 (TH) provides a ligand contact to substrate.

It belongs to the aspartate/glutamate racemases family.

It carries out the reaction L-glutamate = D-glutamate. It functions in the pathway cell wall biogenesis; peptidoglycan biosynthesis. Its function is as follows. Provides the (R)-glutamate required for cell wall biosynthesis. This Streptococcus pyogenes serotype M49 (strain NZ131) protein is Glutamate racemase.